Reading from the N-terminus, the 179-residue chain is Large ribosomal subunit protein uL5 (179 aa).

This sequence belongs to the universal ribosomal protein uL5 family. In terms of assembly, part of the 50S ribosomal subunit; part of the 5S rRNA/L5/L18/L25 subcomplex. Contacts the 5S rRNA and the P site tRNA. Forms a bridge to the 30S subunit in the 70S ribosome.

Functionally, this is one of the proteins that bind and probably mediate the attachment of the 5S RNA into the large ribosomal subunit, where it forms part of the central protuberance. In the 70S ribosome it contacts protein S13 of the 30S subunit (bridge B1b), connecting the 2 subunits; this bridge is implicated in subunit movement. Contacts the P site tRNA; the 5S rRNA and some of its associated proteins might help stabilize positioning of ribosome-bound tRNAs. The chain is Large ribosomal subunit protein uL5 from Variovorax paradoxus (strain S110).